The primary structure comprises 117 residues: Ig heavy chain V region 186-1 (117 aa).

Residues 1-19 (MGWSCIMLFLAATATGVHS) form the signal peptide. The interval 20-49 (QVQLQQPGAELVKPGASVKLSCKASGYTFT) is framework-1. Cysteine 41 and cysteine 115 are disulfide-bonded. A complementarity-determining-1 region spans residues 50–54 (SYWMH). The interval 55 to 68 (WVKQRPGRGLEWIG) is framework-2. Residues 69–85 (RIDPNSGGTKYNEKFKS) are complementarity-determining-2. Positions 86–117 (KATLTVDTSSSTAYMQLHSLTSEDSAVYYCAR) are framework-3.

The chain is Ig heavy chain V region 186-1 from Mus musculus (Mouse).